The sequence spans 99 residues: Large ribosomal subunit protein bL28 (99 aa).

Belongs to the bacterial ribosomal protein bL28 family.

This Rhizobium leguminosarum bv. trifolii (strain WSM2304) protein is Large ribosomal subunit protein bL28.